A 275-amino-acid chain; its full sequence is Phosphate import ATP-binding protein PstB 1 (275 aa).

An ABC transporter domain is found at 22–261 (LETQAVSVYY…NRTEKIFNSP (240 aa)). ATP is bound at residue 54 to 61 (GPSGCGKS).

The protein belongs to the ABC transporter superfamily. Phosphate importer (TC 3.A.1.7) family. The complex is composed of two ATP-binding proteins (PstB), two transmembrane proteins (PstC and PstA) and a solute-binding protein (PstS).

It is found in the cell inner membrane. The catalysed reaction is phosphate(out) + ATP + H2O = ADP + 2 phosphate(in) + H(+). Part of the ABC transporter complex PstSACB involved in phosphate import. Responsible for energy coupling to the transport system. In Synechococcus sp. (strain JA-2-3B'a(2-13)) (Cyanobacteria bacterium Yellowstone B-Prime), this protein is Phosphate import ATP-binding protein PstB 1.